Reading from the N-terminus, the 455-residue chain is MSPTLDDQSPMEIRCTEEGAGPGIFRMELGDQRQSISQSQRWCCLQRGCVILGVLGLLAGAGIASWLLVLYLWPAASPSISGTLQEEEMTLNCPGVSREEELLPSLPKTVSFRINGEDLLLQVQVRARPDWLLVCHEGWSPALGMHICKSLGHIRLTQHKAVNLSDIKLNRSQEFAQLSARPGGLVEESWKPSANCPSGRIVSLKCSECGARPLASRIVGGQAVASGRWPWQASVMLGSRHTCGASVLAPHWVVTAAHCMYSFRLSRLSSWRVHAGLVSHGAVRQHQGTMVEKIIPHPLYSAQNHDYDVALLQLRTPINFSDTVGAVCLPAKEQHFPWGSQCWVSGWGHTDPSHTHSSDTLQDTMVPLLSTYLCNSSCMYSGALTHRMLCAGYLDGRADACQGDSGGPLVCPSGDTWHLVGVVSWGRGCAEPNRPGVYAKVAEFLDWIHDTVQVR.

Topologically, residues 1–49 (MSPTLDDQSPMEIRCTEEGAGPGIFRMELGDQRQSISQSQRWCCLQRGC) are cytoplasmic. A helical; Signal-anchor for type II membrane protein membrane pass occupies residues 50-70 (VILGVLGLLAGAGIASWLLVL). Residues 71–455 (YLWPAASPSI…DWIHDTVQVR (385 aa)) lie on the Extracellular side of the membrane. An SRCR domain is found at 112 to 207 (FRINGEDLLL…SGRIVSLKCS (96 aa)). Disulfide bonds link C135–C196, C148–C206, C209–C328, C243–C259, C342–C411, C374–C390, and C401–C429. 2 N-linked (GlcNAc...) asparagine glycosylation sites follow: N163 and N170. In terms of domain architecture, Peptidase S1 spans 218 to 453 (IVGGQAVASG…FLDWIHDTVQ (236 aa)). Active-site charge relay system residues include H258 and D308. N-linked (GlcNAc...) asparagine glycosylation is found at N319 and N375. The active-site Charge relay system is S405.

This sequence belongs to the peptidase S1 family.

It localises to the cell membrane. Functionally, may play a role in hearing. This chain is Transmembrane protease serine 5 (Tmprss5), found in Mus musculus (Mouse).